Consider the following 84-residue polypeptide: Cell division topological specificity factor (84 aa).

This sequence belongs to the MinE family.

Its function is as follows. Prevents the cell division inhibition by proteins MinC and MinD at internal division sites while permitting inhibition at polar sites. This ensures cell division at the proper site by restricting the formation of a division septum at the midpoint of the long axis of the cell. This Paraburkholderia phymatum (strain DSM 17167 / CIP 108236 / LMG 21445 / STM815) (Burkholderia phymatum) protein is Cell division topological specificity factor.